The primary structure comprises 225 residues: Enolase-phosphatase E1 (225 aa).

Belongs to the HAD-like hydrolase superfamily. MasA/MtnC family. As to quaternary structure, monomer. The cofactor is Mg(2+).

The enzyme catalyses 5-methylsulfanyl-2,3-dioxopentyl phosphate + H2O = 1,2-dihydroxy-5-(methylsulfanyl)pent-1-en-3-one + phosphate. It participates in amino-acid biosynthesis; L-methionine biosynthesis via salvage pathway; L-methionine from S-methyl-5-thio-alpha-D-ribose 1-phosphate: step 3/6. It functions in the pathway amino-acid biosynthesis; L-methionine biosynthesis via salvage pathway; L-methionine from S-methyl-5-thio-alpha-D-ribose 1-phosphate: step 4/6. Bifunctional enzyme that catalyzes the enolization of 2,3-diketo-5-methylthiopentyl-1-phosphate (DK-MTP-1-P) into the intermediate 2-hydroxy-3-keto-5-methylthiopentenyl-1-phosphate (HK-MTPenyl-1-P), which is then dephosphorylated to form the acireductone 1,2-dihydroxy-3-keto-5-methylthiopentene (DHK-MTPene). The polypeptide is Enolase-phosphatase E1 (Shewanella piezotolerans (strain WP3 / JCM 13877)).